Here is a 407-residue protein sequence, read N- to C-terminus: Large ribosomal subunit protein uL3-like (407 aa).

A compositionally biased stretch (basic residues) spans Met1–Thr31. Disordered stretches follow at residues Met1–Asp35 and Gln383–Leu407. Residues Lys394–Leu407 are compositionally biased toward basic and acidic residues.

This sequence belongs to the universal ribosomal protein uL3 family. Component of the large ribosomal subunit in striated muscle cells.

Functionally, heart- and skeletal muscle-specific component of the ribosome, which regulates muscle function. Component of the large ribosomal subunit in striated muscle cells: replaces the RPL3 paralog in the ribosome in these cells. The ribosome is a large ribonucleoprotein complex responsible for the synthesis of proteins in the cell. Inhibits myotube growth and muscle function. The chain is Large ribosomal subunit protein uL3-like (RPL3L) from Bos taurus (Bovine).